The primary structure comprises 128 residues: Large ribosomal subunit protein bL12 (128 aa).

This sequence belongs to the bacterial ribosomal protein bL12 family. Homodimer. Part of the ribosomal stalk of the 50S ribosomal subunit. Forms a multimeric L10(L12)X complex, where L10 forms an elongated spine to which 2 to 4 L12 dimers bind in a sequential fashion. Binds GTP-bound translation factors.

Forms part of the ribosomal stalk which helps the ribosome interact with GTP-bound translation factors. Is thus essential for accurate translation. The protein is Large ribosomal subunit protein bL12 of Corynebacterium aurimucosum (strain ATCC 700975 / DSM 44827 / CIP 107346 / CN-1) (Corynebacterium nigricans).